The primary structure comprises 560 residues: (E)-beta-farnesene synthase (560 aa).

Aspartate 312, aspartate 316, aspartate 457, and glutamate 465 together coordinate Mg(2+). Positions 312–316 (DDTFD) match the DDXXD motif motif.

This sequence belongs to the terpene synthase family. Requires Mg(2+) as cofactor. The cofactor is Co(2+). Mn(2+) is required as a cofactor.

Its subcellular location is the cytoplasm. It carries out the reaction (2E,6E)-farnesyl diphosphate = (E)-beta-farnesene + diphosphate. The protein operates within secondary metabolite biosynthesis; terpenoid biosynthesis. Sesquiterpene cyclase catalyzing the production of beta-farnesene from farnesyl diphosphate. In Citrus junos (Yuzu), this protein is (E)-beta-farnesene synthase.